The chain runs to 142 residues: Universal stress protein G (142 aa).

It belongs to the universal stress protein A family.

The polypeptide is Universal stress protein G (uspG) (Shigella flexneri).